The chain runs to 332 residues: Acetyl-coenzyme A carboxylase carboxyl transferase subunit alpha (332 aa).

The CoA carboxyltransferase C-terminal domain maps to 44-298 (QLESRAQNLR…KETLVNNLEE (255 aa)).

This sequence belongs to the AccA family. Acetyl-CoA carboxylase is a heterohexamer composed of biotin carboxyl carrier protein (AccB), biotin carboxylase (AccC) and two subunits each of ACCase subunit alpha (AccA) and ACCase subunit beta (AccD).

The protein localises to the cytoplasm. It catalyses the reaction N(6)-carboxybiotinyl-L-lysyl-[protein] + acetyl-CoA = N(6)-biotinyl-L-lysyl-[protein] + malonyl-CoA. It functions in the pathway lipid metabolism; malonyl-CoA biosynthesis; malonyl-CoA from acetyl-CoA: step 1/1. Functionally, component of the acetyl coenzyme A carboxylase (ACC) complex. First, biotin carboxylase catalyzes the carboxylation of biotin on its carrier protein (BCCP) and then the CO(2) group is transferred by the carboxyltransferase to acetyl-CoA to form malonyl-CoA. The protein is Acetyl-coenzyme A carboxylase carboxyl transferase subunit alpha of Crocosphaera subtropica (strain ATCC 51142 / BH68) (Cyanothece sp. (strain ATCC 51142)).